A 98-amino-acid polypeptide reads, in one-letter code: uncharacterized protein (98 aa).

This is an uncharacterized protein from Bacillus subtilis (strain 168).